Reading from the N-terminus, the 149-residue chain is Ribonuclease H (149 aa).

In terms of domain architecture, RNase H type-1 spans 1–143; that stretch reads MNQVVIYTDG…ADALANKGVD (143 aa). Residues Asp-9, Glu-47, Asp-69, and Asp-135 each coordinate Mg(2+).

Belongs to the RNase H family. Monomer. The cofactor is Mg(2+).

It localises to the cytoplasm. It carries out the reaction Endonucleolytic cleavage to 5'-phosphomonoester.. Functionally, endonuclease that specifically degrades the RNA of RNA-DNA hybrids. This Paracidovorax citrulli (strain AAC00-1) (Acidovorax citrulli) protein is Ribonuclease H.